Here is a 316-residue protein sequence, read N- to C-terminus: Phosphatidylinositol mannoside acyltransferase (316 aa).

His137 functions as the Proton acceptor in the catalytic mechanism. Residues His137 and Arg175 each coordinate hexadecanoyl-CoA. The active site involves Glu211. Residue Glu240 participates in hexadecanoyl-CoA binding.

Belongs to the LpxL/LpxM/LpxP family.

It localises to the cell inner membrane. The catalysed reaction is a 2,6-O-bis(alpha-D-mannopyranosyl)-1-phosphatidyl-1D-myo-inositol + an acyl-CoA = a 2-O-(alpha-D-mannosyl)-6-O-(6-O-acyl-alpha-D-mannosyl)-1-phosphatidyl-1D-myo-inositol + CoA. It carries out the reaction a 1,2-diacyl-sn-glycero-3-phospho-[alpha-D-mannopyranosyl-(1&lt;-&gt;6)-D-myo-inositol] + an acyl-CoA = a 1,2-diacyl-sn-glycero-3-phospho-[alpha-D-6-acyl-mannopyranosyl-(1&lt;-&gt;6)-D-myo-inositol] + CoA. The protein operates within phospholipid metabolism; phosphatidylinositol metabolism. Functionally, catalyzes the transfer of a palmitoyl moiety from palmitoyl-CoA to the 6-position of the mannose ring linked to the 2-position of myo-inositol in phosphatidyl-myo-inositol monomannoside (PIM1) or dimannoside (PIM2). Essential for growth and survival in axenic cultures and during macrophage infection and in a mouse model of infection. The sequence is that of Phosphatidylinositol mannoside acyltransferase from Mycobacterium tuberculosis (strain ATCC 25618 / H37Rv).